A 186-amino-acid chain; its full sequence is MKPVAPRSFFAMDFLEFITAWEGKWLSQRTNYSFEQNEAGNAKSDVTVQRWDSQTELGRSLLERAGLKNQGELILLQLSWDNSVDWGKSKQKGTIYYGFLPDADHGDRGQLWRGTTNSNLAFLRGDYHLGSDECLTLNLGDGETSLTERHWYASPNLRLRTSLIQQGEGYSHSAFYSDIRRLPPAE.

This sequence belongs to the CpcS/CpeS biliprotein lyase family.

Its function is as follows. Covalently attaches a chromophore to Cys residue(s) of phycobiliproteins. This Synechocystis sp. (strain ATCC 27184 / PCC 6803 / Kazusa) protein is Chromophore lyase CpcS/CpeS 1.